Here is a 663-residue protein sequence, read N- to C-terminus: Drug sensory protein A (663 aa).

3 helical membrane passes run 32 to 52 (LMAAATLVVSLLMSGLTFWAV), 165 to 185 (VFIPLQYQGKFLGVLAIGINP), and 199 to 219 (VTIAVFISIWVMVILGAVFNA). The region spanning 220-272 (LTITQPIKELLLGVKNIAAGNFKQRITLPFGGELGELIVNFNEMAERLERYEA) is the HAMP domain. Positions 281 to 351 (EKAKLDTLVS…QPLRELAADQ (71 aa)) constitute a PAS domain. The 228-residue stretch at 429–656 (NVSHELRTPL…TFWFDLAVYQ (228 aa)) folds into the Histidine kinase domain. Residue His432 is modified to Phosphohistidine; by autocatalysis.

It localises to the cell membrane. The enzyme catalyses ATP + protein L-histidine = ADP + protein N-phospho-L-histidine.. This chain is Drug sensory protein A (dspA), found in Synechocystis sp. (strain ATCC 27184 / PCC 6803 / Kazusa).